The primary structure comprises 241 residues: Major microneme antigen (241 aa).

The N-terminal stretch at 1–34 (MTLPIHFPRCVLYGMASAVWSILFLHILVGDTMS) is a signal peptide. Positions 35–103 (AADALSWSGG…ATGRGPSFVH (69 aa)) are excised as a propeptide. A compositionally biased stretch (basic and acidic residues) spans 64–83 (GKELEQQHGGEEQQMQRDTK). The disordered stretch occupies residues 64-90 (GKELEQQHGGEEQQMQRDTKPAAFSNP). PAN domains lie at 112–181 (CFPH…PRSC) and 185–241 (CTDN…VERA). 6 cysteine pairs are disulfide-bonded: Cys-112/Cys-181, Cys-137/Cys-159, Cys-141/Cys-147, Cys-185/Cys-189, Cys-210/Cys-230, and Cys-214/Cys-220. An a carbohydrate-binding site is contributed by Ser-121. A carbohydrate-binding residues include Lys-162, Tyr-169, and Asp-174.

It belongs to the microneme antigen family. As to quaternary structure, homodimer or heterodimer of major microneme antigen and microneme antigen. In terms of processing, contains six disulfide bonds.

It localises to the cytoplasmic vesicle. Its subcellular location is the secretory vesicle. The protein localises to the microneme. Functionally, galactose-binding lectin. Plays a role in adhesion to the host cell. Has a potential role in invasion of host cells. The polypeptide is Major microneme antigen (Sarcocystis muris).